A 189-amino-acid chain; its full sequence is dTTP/UTP pyrophosphatase (189 aa).

Asp-73 functions as the Proton acceptor in the catalytic mechanism.

It belongs to the Maf family. YhdE subfamily. A divalent metal cation is required as a cofactor.

It localises to the cytoplasm. It carries out the reaction dTTP + H2O = dTMP + diphosphate + H(+). The enzyme catalyses UTP + H2O = UMP + diphosphate + H(+). Nucleoside triphosphate pyrophosphatase that hydrolyzes dTTP and UTP. May have a dual role in cell division arrest and in preventing the incorporation of modified nucleotides into cellular nucleic acids. The polypeptide is dTTP/UTP pyrophosphatase (Vibrio parahaemolyticus serotype O3:K6 (strain RIMD 2210633)).